We begin with the raw amino-acid sequence, 978 residues long: Chaperone protein ClpB2, chloroplastic (978 aa).

The transit peptide at 1 to 76 (MAAAPPLAAG…RMPPRTLSVR (76 aa)) directs the protein to the chloroplast. Residues 85–229 (TQQEFTEMAW…KTAIESIRGK (145 aa)) form the Clp R domain. 2 repeat regions span residues 89 to 154 (FTEM…IQRQ) and 166 to 229 (LGRD…IRGK). An i region spans residues 244–492 (LDKYGKDLTA…KLKMEITSKP (249 aa)). ATP contacts are provided by residues 289–296 (GEPGVGKT) and 692–699 (GPTGVGKT). The interval 618–809 (VTQDDIAEIV…IIIMTSNVGS (192 aa)) is II.

This sequence belongs to the ClpA/ClpB family.

The protein localises to the plastid. The protein resides in the chloroplast. Its function is as follows. Molecular chaperone that may play a role in chloroplast development. The sequence is that of Chaperone protein ClpB2, chloroplastic (CLPB2) from Oryza sativa subsp. japonica (Rice).